The primary structure comprises 87 residues: MGQIQYSEKYFDDTFEYRHVVLPPEVAKLLPKNRLLSENEWRAIGVQQSRGWVHYAVHRPEPHIMLFRRPLNYQQQQENQAQNMLVK.

This sequence belongs to the CKS family. As to quaternary structure, interacts with CDKA-1. Interacts with CDKB1-1, CDKB1-2 and CDKB2-1. Interacts with CYCD2-1 and At4g14310.

Its function is as follows. Associates with cyclin-dependent kinases (CDKs) and plays an essential role in the regulation of the cell cycle that affects plant growth rate. May inhibit both the G1/S and G2/M phases. This is Cyclin-dependent kinases regulatory subunit 1 (CKS1) from Arabidopsis thaliana (Mouse-ear cress).